The primary structure comprises 516 residues: Extracellular endo-inulinase inuB (516 aa).

Residues 1-25 form the signal peptide; it reads MLNPKVAYMVWMTCLGLTLPSQAQS. Substrate is bound by residues 40–43, Gln59, Trp67, and 99–100; these read WMNE and FT. Glu43 is a catalytic residue. Asn109 is a glycosylation site (N-linked (GlcNAc...) asparagine). Substrate contacts are provided by residues 175–176 and Glu233; that span reads RD. 3 N-linked (GlcNAc...) asparagine glycosylation sites follow: Asn372, Asn419, and Asn424.

The protein belongs to the glycosyl hydrolase 32 family.

Its subcellular location is the secreted. The enzyme catalyses Endohydrolysis of (2-&gt;1)-beta-D-fructosidic linkages in inulin.. Its function is as follows. Endo-inulinase involved in utilization of the plant storage polymer inulin, consisting of fructooligosaccharides with a degree of polymerization (DP) value from 2 to 60. This is Extracellular endo-inulinase inuB (inuB) from Aspergillus niger.